The sequence spans 454 residues: Divalent metal cation transporter MntH (454 aa).

The segment at 1–21 (MSDAEATAPRSSWRFAGRDED) is disordered. The next 11 membrane-spanning stretches (helical) occupy residues 45-65 (LFAF…PGNW), 78-98 (TLLF…ALAA), 122-142 (FVLW…EVIG), 153-173 (IPLI…LLLM), 182-202 (AFVI…IFVA), 220-240 (IVTN…TVMP), 275-295 (IALM…AVAF), 312-332 (LLSP…ALLA), 368-388 (GLAI…GTGQ), 389-409 (LLVF…VPLV), and 426-446 (GVAA…FKLL).

It belongs to the NRAMP family.

Its subcellular location is the cell inner membrane. H(+)-stimulated, divalent metal cation uptake system. In Mesorhizobium japonicum (strain LMG 29417 / CECT 9101 / MAFF 303099) (Mesorhizobium loti (strain MAFF 303099)), this protein is Divalent metal cation transporter MntH.